We begin with the raw amino-acid sequence, 141 residues long: 15 kDa lipoprotein (141 aa).

The signal sequence occupies residues 1 to 17 (MVKRGRFALCLAVLLGA). Cysteine 18 carries the N-palmitoyl cysteine lipid modification. A lipid anchor (S-diacylglycerol cysteine) is attached at cysteine 18.

It localises to the cell membrane. The sequence is that of 15 kDa lipoprotein (tpp15) from Treponema pallidum (strain Nichols).